The chain runs to 197 residues: Holliday junction branch migration complex subunit RuvA (197 aa).

The segment at 1-64 (MIDSIVGTIQ…LSELECYGFL (64 aa)) is domain I. A domain II region spans residues 65 to 143 (TREERELFLK…KEFKVASTSG (79 aa)). Residues 144–152 (TEEKTYEKL) form a flexible linker region. A domain III region spans residues 152-197 (LEEISLALLSLGYEIDEINQVLSSEDFSELSLEDGIKLALKKLSKI).

It belongs to the RuvA family. In terms of assembly, homotetramer. Forms an RuvA(8)-RuvB(12)-Holliday junction (HJ) complex. HJ DNA is sandwiched between 2 RuvA tetramers; dsDNA enters through RuvA and exits via RuvB. An RuvB hexamer assembles on each DNA strand where it exits the tetramer. Each RuvB hexamer is contacted by two RuvA subunits (via domain III) on 2 adjacent RuvB subunits; this complex drives branch migration. In the full resolvosome a probable DNA-RuvA(4)-RuvB(12)-RuvC(2) complex forms which resolves the HJ.

The protein localises to the cytoplasm. Functionally, the RuvA-RuvB-RuvC complex processes Holliday junction (HJ) DNA during genetic recombination and DNA repair, while the RuvA-RuvB complex plays an important role in the rescue of blocked DNA replication forks via replication fork reversal (RFR). RuvA specifically binds to HJ cruciform DNA, conferring on it an open structure. The RuvB hexamer acts as an ATP-dependent pump, pulling dsDNA into and through the RuvAB complex. HJ branch migration allows RuvC to scan DNA until it finds its consensus sequence, where it cleaves and resolves the cruciform DNA. The protein is Holliday junction branch migration complex subunit RuvA of Caldicellulosiruptor saccharolyticus (strain ATCC 43494 / DSM 8903 / Tp8T 6331).